The primary structure comprises 71 residues: Defensin-like protein 292 (71 aa).

3 disulfides stabilise this stretch: Cys-44–Cys-64, Cys-50–Cys-69, and Cys-56–Cys-71.

The protein belongs to the DEFL family.

The chain is Defensin-like protein 292 from Arabidopsis thaliana (Mouse-ear cress).